The following is a 492-amino-acid chain: Tumor necrosis factor receptor superfamily member 8 (492 aa).

The signal sequence occupies residues 1–18 (MSILLKAAGLLFLGMLQA). Residues 19–282 (FPKDRPLDTT…STGTPFLDPG (264 aa)) are Extracellular-facing. TNFR-Cys repeat units follow at residues 57-104 (PCPQ…PRIC) and 105-141 (ECQP…NTIC). Disulfide bonds link Cys-58-Cys-80, Cys-83-Cys-96, Cys-86-Cys-104, and Cys-123-Cys-141. The tract at residues 141–178 (CDLPSPGSGPNGSNPDDCKTLTSHTTPQAIPTLESPAN) is disordered. Low complexity predominate over residues 144-155 (PSPGSGPNGSNP). Residues Asn-151, Asn-178, and Asn-224 are each glycosylated (N-linked (GlcNAc...) asparagine). Positions 160-178 (TLTSHTTPQAIPTLESPAN) are enriched in polar residues. Residues 283–303 (SMLFWVAMVVLLVGSASFLLC) traverse the membrane as a helical segment. The Cytoplasmic segment spans residues 304–492 (YWKACRRRFQ…DHEPTTVSEK (189 aa)). Ser-334 and Ser-348 each carry phosphoserine. Disordered stretches follow at residues 336–366 (PTEK…PPAV) and 432–492 (PEGR…VSEK). Residues 339–360 (KLTQLQRSGSVTDSSAGHTLSP) show a composition bias toward polar residues. Composition is skewed to basic and acidic residues over residues 450–459 (EVDHTPHYPE) and 478–492 (EGGK…VSEK).

This sequence belongs to the TNFR8 family. As to quaternary structure, interacts with TRAF1, TRAF2, TRAF3 and TRAF5. In terms of tissue distribution, very low level of expression. Detected in spleen, thymus and lung. Highly expressed in HTLV-1 infected T-cell lines.

Its subcellular location is the cell membrane. Receptor for TNFSF8/CD30L. May play a role in the regulation of cellular growth and transformation of activated lymphoblasts. Regulates gene expression through activation of NF-kappa-B. The protein is Tumor necrosis factor receptor superfamily member 8 of Rattus norvegicus (Rat).